Consider the following 80-residue polypeptide: Exodeoxyribonuclease 7 small subunit (80 aa).

The protein belongs to the XseB family. As to quaternary structure, heterooligomer composed of large and small subunits.

It is found in the cytoplasm. It catalyses the reaction Exonucleolytic cleavage in either 5'- to 3'- or 3'- to 5'-direction to yield nucleoside 5'-phosphates.. Its function is as follows. Bidirectionally degrades single-stranded DNA into large acid-insoluble oligonucleotides, which are then degraded further into small acid-soluble oligonucleotides. The chain is Exodeoxyribonuclease 7 small subunit from Vibrio campbellii (strain ATCC BAA-1116).